A 360-amino-acid polypeptide reads, in one-letter code: Phospho-N-acetylmuramoyl-pentapeptide-transferase (360 aa).

Residues M1–R25 are Periplasmic-facing. A helical membrane pass occupies residues A26–A46. The Cytoplasmic segment spans residues R47 to T71. Residues P72–Y92 traverse the membrane as a helical segment. Position 93 (P93) is a topological domain, periplasmic. A helical membrane pass occupies residues S94 to V114. The Cytoplasmic portion of the chain corresponds to D115 to R131. Residues W132–G152 traverse the membrane as a helical segment. At K153 to D167 the chain is on the periplasmic side. Residues V168–G188 form a helical membrane-spanning segment. Residues N189–D198 lie on the Cytoplasmic side of the membrane. Residues G199–T219 traverse the membrane as a helical segment. Residues G220–H235 are Periplasmic-facing. Residues A236–F256 form a helical membrane-spanning segment. Residues N257 to Q262 are Cytoplasmic-facing. Residues V263–L283 traverse the membrane as a helical segment. Residues L284–E287 are Periplasmic-facing. The helical transmembrane segment at F288–V308 threads the bilayer. Topologically, residues G309–R337 are cytoplasmic. Residues V338–K358 form a helical membrane-spanning segment. The Periplasmic segment spans residues V359–R360.

It belongs to the glycosyltransferase 4 family. MraY subfamily. Mg(2+) is required as a cofactor.

It is found in the cell inner membrane. It catalyses the reaction UDP-N-acetyl-alpha-D-muramoyl-L-alanyl-gamma-D-glutamyl-meso-2,6-diaminopimeloyl-D-alanyl-D-alanine + di-trans,octa-cis-undecaprenyl phosphate = di-trans,octa-cis-undecaprenyl diphospho-N-acetyl-alpha-D-muramoyl-L-alanyl-D-glutamyl-meso-2,6-diaminopimeloyl-D-alanyl-D-alanine + UMP. Its pathway is cell wall biogenesis; peptidoglycan biosynthesis. In terms of biological role, catalyzes the initial step of the lipid cycle reactions in the biosynthesis of the cell wall peptidoglycan: transfers peptidoglycan precursor phospho-MurNAc-pentapeptide from UDP-MurNAc-pentapeptide onto the lipid carrier undecaprenyl phosphate, yielding undecaprenyl-pyrophosphoryl-MurNAc-pentapeptide, known as lipid I. The protein is Phospho-N-acetylmuramoyl-pentapeptide-transferase of Salmonella gallinarum (strain 287/91 / NCTC 13346).